The sequence spans 269 residues: Formamidopyrimidine-DNA glycosylase (269 aa).

Catalysis depends on Pro-2, which acts as the Schiff-base intermediate with DNA. Glu-3 acts as the Proton donor in catalysis. Lys-57 (proton donor; for beta-elimination activity) is an active-site residue. His-90, Arg-109, and Lys-150 together coordinate DNA. Residues 235–269 form an FPG-type zinc finger; sequence QVYGRKGEPCRVCGTPIVATKHAQRATFYCRHCQK. Arg-259 serves as the catalytic Proton donor; for delta-elimination activity.

This sequence belongs to the FPG family. As to quaternary structure, monomer. Zn(2+) serves as cofactor.

It catalyses the reaction Hydrolysis of DNA containing ring-opened 7-methylguanine residues, releasing 2,6-diamino-4-hydroxy-5-(N-methyl)formamidopyrimidine.. It carries out the reaction 2'-deoxyribonucleotide-(2'-deoxyribose 5'-phosphate)-2'-deoxyribonucleotide-DNA = a 3'-end 2'-deoxyribonucleotide-(2,3-dehydro-2,3-deoxyribose 5'-phosphate)-DNA + a 5'-end 5'-phospho-2'-deoxyribonucleoside-DNA + H(+). Its function is as follows. Involved in base excision repair of DNA damaged by oxidation or by mutagenic agents. Acts as a DNA glycosylase that recognizes and removes damaged bases. Has a preference for oxidized purines, such as 7,8-dihydro-8-oxoguanine (8-oxoG). Has AP (apurinic/apyrimidinic) lyase activity and introduces nicks in the DNA strand. Cleaves the DNA backbone by beta-delta elimination to generate a single-strand break at the site of the removed base with both 3'- and 5'-phosphates. The protein is Formamidopyrimidine-DNA glycosylase of Salmonella agona (strain SL483).